The primary structure comprises 207 residues: Holliday junction branch migration complex subunit RuvA (207 aa).

The segment at Met-1–His-65 is domain I. Positions Thr-66–Leu-144 are domain II. Positions Ala-145–Met-155 are flexible linker. A domain III region spans residues Met-155–Ile-207.

The protein belongs to the RuvA family. As to quaternary structure, homotetramer. Forms an RuvA(8)-RuvB(12)-Holliday junction (HJ) complex. HJ DNA is sandwiched between 2 RuvA tetramers; dsDNA enters through RuvA and exits via RuvB. An RuvB hexamer assembles on each DNA strand where it exits the tetramer. Each RuvB hexamer is contacted by two RuvA subunits (via domain III) on 2 adjacent RuvB subunits; this complex drives branch migration. In the full resolvosome a probable DNA-RuvA(4)-RuvB(12)-RuvC(2) complex forms which resolves the HJ.

The protein resides in the cytoplasm. Functionally, the RuvA-RuvB-RuvC complex processes Holliday junction (HJ) DNA during genetic recombination and DNA repair, while the RuvA-RuvB complex plays an important role in the rescue of blocked DNA replication forks via replication fork reversal (RFR). RuvA specifically binds to HJ cruciform DNA, conferring on it an open structure. The RuvB hexamer acts as an ATP-dependent pump, pulling dsDNA into and through the RuvAB complex. HJ branch migration allows RuvC to scan DNA until it finds its consensus sequence, where it cleaves and resolves the cruciform DNA. The sequence is that of Holliday junction branch migration complex subunit RuvA from Chlamydia abortus (strain DSM 27085 / S26/3) (Chlamydophila abortus).